A 541-amino-acid polypeptide reads, in one-letter code: GTPase Obg (541 aa).

The 158-residue stretch at 2-159 (PTFVDRVVLH…LDAVLELKSV (158 aa)) folds into the Obg domain. The disordered stretch occupies residues 63–84 (HPHQRAGGGRPGQGSNRHGADG). Residues 160 to 332 (ADVALVGFPS…LALALAELVA (173 aa)) enclose the OBG-type G domain. GTP contacts are provided by residues 166–173 (GFPSAGKS), 191–195 (FTTLV), 213–216 (DVPG), 284–287 (NKVD), and 313–315 (STA). Residues Ser173 and Thr193 each contribute to the Mg(2+) site. Positions 350–427 (PRAVDEPDFT…IGAVTFDWEP (78 aa)) constitute an OCT domain. A disordered region spans residues 497–541 (KRLTRAQRTALSDSADDFDDGAGFSDSAAFGDSGGSGGDADGGRG). Low complexity predominate over residues 517–527 (GAGFSDSAAFG). Residues 528 to 541 (DSGGSGGDADGGRG) show a composition bias toward gly residues.

This sequence belongs to the TRAFAC class OBG-HflX-like GTPase superfamily. OBG GTPase family. In terms of assembly, monomer. Requires Mg(2+) as cofactor.

It is found in the cytoplasm. Functionally, an essential GTPase which binds GTP, GDP and possibly (p)ppGpp with moderate affinity, with high nucleotide exchange rates and a fairly low GTP hydrolysis rate. Plays a role in control of the cell cycle, stress response, ribosome biogenesis and in those bacteria that undergo differentiation, in morphogenesis control. The protein is GTPase Obg of Parafrankia sp. (strain EAN1pec).